Consider the following 114-residue polypeptide: uncharacterized protein (114 aa).

The next 2 membrane-spanning stretches (helical) occupy residues 9-29 (LAIF…SFWL) and 75-95 (LVHF…VAII).

The protein resides in the cell membrane. This is an uncharacterized protein from Mycoplasma pneumoniae (strain ATCC 29342 / M129 / Subtype 1) (Mycoplasmoides pneumoniae).